The primary structure comprises 462 residues: Hemopexin (462 aa).

The signal sequence occupies residues 1–23 (MARVLGAPVALGLWSLCWSLAIA). O-linked (GalNAc...) threonine glycosylation is found at T24 and T29. The disordered stretch occupies residues 29–48 (TSAHGNVAEGETKPDPDVTE). Residues 30–40 (SAHGNVAEGET) are O-glycosylated at one site. Basic and acidic residues predominate over residues 38–48 (GETKPDPDVTE). 3 cysteine pairs are disulfide-bonded: C50-C231, C149-C154, and C188-C200. Hemopexin repeat units follow at residues 53–93 (GWSF…WKNF), 94–139 (PSPV…FPGI), 140–184 (PSPL…SWPA), and 185–231 (VGNC…FMPC). An N-linked (GlcNAc...) (complex) asparagine glycan is attached at N64. H79 lines the heme pocket. H150 contacts heme. An N-linked (GlcNAc...) (complex) asparagine glycan is attached at N187. Heme is bound at residue H236. Residues N240 and N246 are each glycosylated (N-linked (GlcNAc...) asparagine). Cystine bridges form between C257–C460, C366–C408, and C418–C435. Hemopexin repeat units lie at residues 259 to 304 (PHLV…WPQG), 305 to 352 (PSAV…VGTP), 357 to 396 (LDSV…WTEL), and 400 to 450 (HEKV…ALPQ). H293 lines the heme pocket. N-linked (GlcNAc...) (complex) asparagine glycosylation is present at N453.

It belongs to the hemopexin family. In terms of assembly, interacts with FLVCR1. As to quaternary structure, (Microbial infection) Interacts with hepatitis E virus/HEV protein ORF3. N- and O-glycosylated. O-glycosylated with core 1 or possibly core 8 glycans. O-glycosylation in the 30-40 region is minor compared to glycosylation at Thr-24 and Thr-29. Expressed by the liver and secreted in plasma.

It is found in the secreted. Its function is as follows. Binds heme and transports it to the liver for breakdown and iron recovery, after which the free hemopexin returns to the circulation. This is Hemopexin (HPX) from Homo sapiens (Human).